The following is a 703-amino-acid chain: DNA ligase (703 aa).

The disordered stretch occupies residues 1 to 20 (MNDNLDLFSGAAPAAPESGA). Over residues 9 to 20 (SGAAPAAPESGA) the composition is skewed to low complexity. Residues 53–57 (DGEYD), 102–103 (SI), and Glu139 contribute to the NAD(+) site. The active-site N6-AMP-lysine intermediate is Lys141. Positions 162, 200, 321, and 345 each coordinate NAD(+). Zn(2+) contacts are provided by Cys439, Cys442, Cys457, and Cys463. The 82-residue stretch at 622–703 (QTAQPLAGMT…MLALLAGGDR (82 aa)) folds into the BRCT domain.

This sequence belongs to the NAD-dependent DNA ligase family. LigA subfamily. It depends on Mg(2+) as a cofactor. Mn(2+) is required as a cofactor.

It catalyses the reaction NAD(+) + (deoxyribonucleotide)n-3'-hydroxyl + 5'-phospho-(deoxyribonucleotide)m = (deoxyribonucleotide)n+m + AMP + beta-nicotinamide D-nucleotide.. Its function is as follows. DNA ligase that catalyzes the formation of phosphodiester linkages between 5'-phosphoryl and 3'-hydroxyl groups in double-stranded DNA using NAD as a coenzyme and as the energy source for the reaction. It is essential for DNA replication and repair of damaged DNA. This is DNA ligase from Delftia acidovorans (strain DSM 14801 / SPH-1).